The following is a 650-amino-acid chain: Chaperone protein DnaK (650 aa).

Residue Thr-200 is modified to Phosphothreonine; by autocatalysis. The tract at residues 613–634 (QAGAAGAAGAAEGAAHAGGAQQ) is disordered.

This sequence belongs to the heat shock protein 70 family.

Its function is as follows. Acts as a chaperone. In Burkholderia vietnamiensis (strain G4 / LMG 22486) (Burkholderia cepacia (strain R1808)), this protein is Chaperone protein DnaK.